Reading from the N-terminus, the 690-residue chain is Serotransferrin-1 (690 aa).

A signal peptide spans 1 to 18 (MKLLLLSALLGCLATAYA). 2 consecutive Transferrin-like domains span residues 25–329 (VKWC…SLKK) and 340–669 (IKWC…SLRK). Cysteines 28 and 50 form a disulfide. 2 residues coordinate Fe(3+): D74 and Y104. Cystine bridges form between C127–C207, C172–C186, and C235–C249. 4 residues coordinate hydrogencarbonate: T129, S134, G136, and W137. N-linked (GlcNAc...) asparagine glycosylation is present at N169. Y201 lines the Fe(3+) pocket. Residue H257 participates in Fe(3+) binding. 2 cysteine pairs are disulfide-bonded: C343-C379 and C353-C370. D394 and Y428 together coordinate Fe(3+). 7 cysteine pairs are disulfide-bonded: C404–C681, C419–C642, C451–C529, C475–C670, C485–C499, C496–C512, and C569–C583. Residues T453, R457, A459, and G460 each contribute to the hydrogencarbonate site. Residue Y523 participates in Fe(3+) binding. Residue H591 participates in Fe(3+) binding.

This sequence belongs to the transferrin family. Monomer. Abundant in liver and serum with smaller amounts found in the stomach and kidney.

The protein resides in the secreted. Functionally, transferrins are iron binding transport proteins which can bind two Fe(3+) ions in association with the binding of an anion, usually bicarbonate. It is responsible for the transport of iron from sites of absorption and heme degradation to those of storage and utilization. Serum transferrin may also have a further role in stimulating cell proliferation. The polypeptide is Serotransferrin-1 (tf1) (Salmo salar (Atlantic salmon)).